The following is a 232-amino-acid chain: U-scoloptoxin(11)-Ssd2a (232 aa).

A signal peptide spans 1 to 21 (MFQFCLLILLLAPGRFFSALG). Residues 22–32 (KPQETLTVENR) constitute a propeptide that is removed on maturation.

In terms of processing, contains 8 disulfide bonds. Expressed by the venom gland.

The protein resides in the secreted. The polypeptide is U-scoloptoxin(11)-Ssd2a (Scolopendra dehaani (Thai centipede)).